The chain runs to 422 residues: Target of rapamycin complex 2 subunit bit61 (422 aa).

Residues 48-69 show a composition bias toward polar residues; it reads VTTKESNVGDSDTTENIKSPFN. Positions 48-101 are disordered; that stretch reads VTTKESNVGDSDTTENIKSPFNGQWPFSRRSSQSSSHPVFEETHWSKHSKRPGK. Residues Ser-109, Ser-132, and Ser-201 each carry the phosphoserine modification.

Belongs to the BIT61 family. As to quaternary structure, the target of rapamycin complex 2 (TORC2) is composed of at least bit61, pop3/wat1, sin1, ste20 and tor1. In terms of processing, either Thr-23, Thr-25 or Ser-26 and Ser-78 or Ser-79 are phosphorylated as well.

It is found in the cytoplasm. The protein localises to the nucleus. Component of TORC2, which regulates multiple cellular processes to control cell growth in response to environmental signals. TORC2 is required for cell survival under various stress conditions. TORC2 positively controls G1 cell-cycle arrest, sexual development and amino acid uptake. Positively regulates amino acid uptake through the control of expression of amino acid permeases. This Schizosaccharomyces pombe (strain 972 / ATCC 24843) (Fission yeast) protein is Target of rapamycin complex 2 subunit bit61.